Here is a 320-residue protein sequence, read N- to C-terminus: METTKTQFESMAEMIKKLPQHTCSSLKGRITLYKYQDFWGLQNNIEGAILAQQSFKARPDDVFLCSYPKSGTTWLKALAYAIVTREKFDEFTSPLLTNIPHNCIPYIEKDLKKIVENQNNSCFTPMATHMPYHVLPKSILALNCKMVYIYRNIKDVIVSFYHFGREITKLPLEDAPFEEAFDEFYHGISQFGPYWDHLLGYWKASLERPEVILFLKYEDVKKDPTSNVKRLAEFIGYPFTFEEEKEGVIESIIKLCSFENLSNLEVNKSGNSKGFLPIENRLYFRKAKDGDWKNYFTDEMTEKIDKLIDEKLSATGLVLK.

69–74 contacts 3'-phosphoadenylyl sulfate; it reads KSGTTW. H129 acts as the Proton acceptor in catalysis. 3'-phosphoadenylyl sulfate contacts are provided by residues R151, S159, Y217, and 285–287; that span reads RKA.

It belongs to the sulfotransferase 1 family. As to expression, highest in shoot tips and lowest in mature leaves and roots.

The protein localises to the cytoplasm. The enzyme catalyses quercetin 3-sulfate + 3'-phosphoadenylyl sulfate = quercetin 3,4'-bissulfate + adenosine 3',5'-bisphosphate + H(+). No requirement for divalent cations and insensitive to p-chloromercuribenzoate, iodoacetate, or iodoacetamide. In terms of biological role, sulfotransferase that utilizes 3'-phospho-5'-adenylyl sulfate (PAPS) as sulfonate donor to catalyze the sulfate conjugation of quercetin 3-sulfate &gt; kaempferol 3-sulfate &gt; isorhamnetin 3-sulfate &gt; patuletin 3-sulfate, but not tamarixetin 3-sulfate. O-sulfation of position 4' of flavonol. May play a role in auxin transport. The sequence is that of Flavonol 4'-sulfotransferase from Flaveria chlorifolia (Clasping yellowtops).